A 336-amino-acid polypeptide reads, in one-letter code: Quinolinate synthase (336 aa).

2 residues coordinate iminosuccinate: His25 and Ser42. Cys86 serves as a coordination point for [4Fe-4S] cluster. Residues 117 to 119 and Ser138 contribute to the iminosuccinate site; that span reads YIN. Cys198 is a [4Fe-4S] cluster binding site. Iminosuccinate is bound by residues 224-226 and Thr241; that span reads HPE. [4Fe-4S] cluster is bound at residue Cys288.

The protein belongs to the quinolinate synthase family. Type 3 subfamily. Requires [4Fe-4S] cluster as cofactor.

It is found in the cytoplasm. The catalysed reaction is iminosuccinate + dihydroxyacetone phosphate = quinolinate + phosphate + 2 H2O + H(+). Its pathway is cofactor biosynthesis; NAD(+) biosynthesis; quinolinate from iminoaspartate: step 1/1. Catalyzes the condensation of iminoaspartate with dihydroxyacetone phosphate to form quinolinate. The sequence is that of Quinolinate synthase from Helicobacter pylori (strain HPAG1).